The primary structure comprises 229 residues: 2-C-methyl-D-erythritol 4-phosphate cytidylyltransferase (229 aa).

It belongs to the IspD/TarI cytidylyltransferase family. IspD subfamily.

The enzyme catalyses 2-C-methyl-D-erythritol 4-phosphate + CTP + H(+) = 4-CDP-2-C-methyl-D-erythritol + diphosphate. It functions in the pathway isoprenoid biosynthesis; isopentenyl diphosphate biosynthesis via DXP pathway; isopentenyl diphosphate from 1-deoxy-D-xylulose 5-phosphate: step 2/6. Functionally, catalyzes the formation of 4-diphosphocytidyl-2-C-methyl-D-erythritol from CTP and 2-C-methyl-D-erythritol 4-phosphate (MEP). This is 2-C-methyl-D-erythritol 4-phosphate cytidylyltransferase from Neisseria meningitidis serogroup C (strain 053442).